We begin with the raw amino-acid sequence, 359 residues long: DNA polymerase IV (359 aa).

A UmuC domain is found at 4–184; sequence IVHVDMDAFY…LKVNRIPGVG (181 aa). 2 residues coordinate Mg(2+): Asp-8 and Asp-102. Residue Glu-103 is part of the active site.

This sequence belongs to the DNA polymerase type-Y family. In terms of assembly, monomer. Mg(2+) is required as a cofactor.

Its subcellular location is the cytoplasm. It carries out the reaction DNA(n) + a 2'-deoxyribonucleoside 5'-triphosphate = DNA(n+1) + diphosphate. Functionally, poorly processive, error-prone DNA polymerase involved in untargeted mutagenesis. Copies undamaged DNA at stalled replication forks, which arise in vivo from mismatched or misaligned primer ends. These misaligned primers can be extended by PolIV. Exhibits no 3'-5' exonuclease (proofreading) activity. May be involved in translesional synthesis, in conjunction with the beta clamp from PolIII. This is DNA polymerase IV from Xanthomonas euvesicatoria pv. vesicatoria (strain 85-10) (Xanthomonas campestris pv. vesicatoria).